Here is a 1150-residue protein sequence, read N- to C-terminus: MDESIDDVQETRTIAIPLKDSHEDEVIEINCSELPDGEEVLQILEAEEAKLSYWIEVALEYYRQDRVDLFMMILESAGSRAGLEYEGVKQDQMRALDILAAYWMTQGYREKAKDKKSDFFSKATVLFNTADKIAMYEWSHLTVRAWFYLFERDKSTNKYELADQQFNYVVKTNPKNVLPLIGKAVIAFNKKDYKTAIYYFRKAIRQCRHTIADLRVGIGHCFAKMGMMDKAKTAFERAMEIEPYNVSAMCGLGIILLNTYDHDSLKHAVSLFGRSYNLQTDHPVALIHLANHFFFKKEIERAWTLAWHAATYNDCDSIKAEAFYQMGRCRHAQGQFDGAYKYYYQARQANNGEHTLAHYGLGQMYIHRNEIEEAIKCFDTVHKRLPNNTDTMKILGSLYAHVQLNDPAQTAEARQKGRDVLGKYLAVENDDYEACIDLAQLLEATDPKRSLELYENAIDLLVTNESIQPQPEMLNNVGALYMSMKQYEKAEHHFKRAKERLEEQLNTDEGSLLLERRSAPEKSHLLTIRYNLALCLEHLCRTVEAEQMYKDIVKECPGYIDGYLRLGCITRDRHQVYESSLWLKQGVQFDQASPIVWTLIGNLHFAKNEWMPAQKKFEFILSKIFNNKIPDPYSLVALGNVWFEQLLNPSRKKEDEKKYIDRALQMYQKALKLQPKNMYAANGIGCVLAYKRNWNDARDVFSQVRESTSEFYDVWLNIAHVCMEREQWMAAVQMYSSAMKKFRKENDSTLQHYLAKAYYRANMLNEAKEALECAMLDQLDNTQLKFNYAIVLKKSAKEVLRGHKMTSEQVTAAIDDLKFADKIFQYISKNDDRQSSHTGMRISRTICAEEAKNCKDLLTQAKHKLAAAQTQDEEERRLMEKQEKEKIALQNKMIEEARAKEEAEKQKLEDMKNLRLSFIEMTKDVLRLPEIVEEKRRGGGGRKRRNDDGDEFVNDSSDAGNYDGEEGGEDGERRERRKKDKAAKKASRKKRERRDSGGPDSNRRDEKKRKRKEERDRKLQEKLSAKQSAKIKSRAFLSSSESSDDDKPKPAADSSDDEVDPRPPVDEFDSPTRTDSDSDRETTTKKKKKKAVVDSDEGSVSGSGSGSDNDDKPIIGGSDDDDDDKPAGGNSRDSDGSDAPKKKVIESDSD.

TPR repeat units follow at residues 143–176 (VRAWFYLFERDKSTNKYELADQQFNYVVKTNPKN), 177–210 (VLPLIGKAVIAFNKKDYKTAIYYFRKAIRQCRHT), 212–245 (ADLRVGIGHCFAKMGMMDKAKTAFERAMEIEPYN), 247–282 (SAMCGLGIILLNTYDHDSLKHAVSLFGRSYNLQTDH), 320–353 (AEAFYQMGRCRHAQGQFDGAYKYYYQARQANNGE), 355–388 (TLAHYGLGQMYIHRNEIEEAIKCFDTVHKRLPNN), 432–464 (YEACIDLAQLLEATDPKRSLELYENAIDLLVTN), 471–504 (PEMLNNVGALYMSMKQYEKAEHHFKRAKERLEEQ), 594–627 (PIVWTLIGNLHFAKNEWMPAQKKFEFILSKIFNN), 643–677 (FEQLLNPSRKKEDEKKYIDRALQMYQKALKLQPKN), 679–711 (YAANGIGCVLAYKRNWNDARDVFSQVRESTSEF), 712–745 (YDVWLNIAHVCMEREQWMAAVQMYSSAMKKFRKE), and 748–781 (STLQHYLAKAYYRANMLNEAKEALECAMLDQLDN). Coiled-coil stretches lie at residues 848–916 (AEEA…NLRL) and 972–1028 (ERRE…AKQS). The interval 935 to 1150 (KRRGGGGRKR…KKKVIESDSD (216 aa)) is disordered. Basic residues predominate over residues 975 to 992 (ERRKKDKAAKKASRKKRE). Basic and acidic residues-rich tracts occupy residues 993 to 1005 (RRDSGGPDSNRRD), 1013 to 1024 (EERDRKLQEKLS), 1060 to 1084 (DPRPPVDEFDSPTRTDSDSDRETTT), and 1132 to 1150 (RDSDGSDAPKKKVIESDSD).

In terms of assembly, component of the PAF1 complex which consists of at least cdc-73, ctr-9, leo-1, pafo-1 and rtfo-1.

Its subcellular location is the nucleus. Functionally, component of the PAF1 complex which is a multifunctional complex involved in transcription initiation via genetic interactions with TATA-binding proteins, elongation and transcription-coupled histone modification. Ctr-9 is required for epidermal microtubule organization during morphogenesis. This is RNA polymerase-associated protein CTR9 from Caenorhabditis elegans.